Reading from the N-terminus, the 132-residue chain is Interleukin-4 (132 aa).

The first 24 residues, 1–24 (MGLTSQLIPTLVCLLALTSTFVHG), serve as a signal peptide directing secretion. N-linked (GlcNAc...) asparagine glycans are attached at residues Asn-28, Asn-45, Asn-62, and Asn-101. Intrachain disulfides connect Cys-48–Cys-84 and Cys-70–Cys-104.

This sequence belongs to the IL-4/IL-13 family.

It is found in the secreted. In terms of biological role, participates in at least several B-cell activation processes as well as of other cell types. It is a costimulator of DNA-synthesis. It induces the expression of class II MHC molecules on resting B-cells. It enhances both secretion and cell surface expression of IgE and IgG1. It also regulates the expression of the low affinity Fc receptor for IgE (CD23) on both lymphocytes and monocytes. Positively regulates IL31RA expression in macrophages. Stimulates autophagy in dendritic cells by interfering with mTORC1 signaling and through the induction of RUFY4. This is Interleukin-4 (IL4) from Ailuropoda melanoleuca (Giant panda).